Here is a 333-residue protein sequence, read N- to C-terminus: Tetraacyldisaccharide 4'-kinase (333 aa).

Residue 55 to 62 (TIGGNGKT) participates in ATP binding.

It belongs to the LpxK family.

The enzyme catalyses a lipid A disaccharide + ATP = a lipid IVA + ADP + H(+). It participates in glycolipid biosynthesis; lipid IV(A) biosynthesis; lipid IV(A) from (3R)-3-hydroxytetradecanoyl-[acyl-carrier-protein] and UDP-N-acetyl-alpha-D-glucosamine: step 6/6. In terms of biological role, transfers the gamma-phosphate of ATP to the 4'-position of a tetraacyldisaccharide 1-phosphate intermediate (termed DS-1-P) to form tetraacyldisaccharide 1,4'-bis-phosphate (lipid IVA). In Blochmanniella floridana, this protein is Tetraacyldisaccharide 4'-kinase.